We begin with the raw amino-acid sequence, 156 residues long: Small ribosomal subunit protein uS7 (156 aa).

The protein belongs to the universal ribosomal protein uS7 family. In terms of assembly, part of the 30S ribosomal subunit. Contacts proteins S9 and S11.

In terms of biological role, one of the primary rRNA binding proteins, it binds directly to 16S rRNA where it nucleates assembly of the head domain of the 30S subunit. Is located at the subunit interface close to the decoding center, probably blocks exit of the E-site tRNA. The polypeptide is Small ribosomal subunit protein uS7 (Streptococcus sanguinis (strain SK36)).